Reading from the N-terminus, the 399-residue chain is Brefeldin A resistance protein (399 aa).

Basic and acidic residues-rich tracts occupy residues 1-31 (MTSK…DETS), 49-69 (SKSE…KETT), and 101-130 (KVEE…KESA). 2 disordered regions span residues 1-173 (MTSK…FGAF) and 191-269 (KKFA…SEII). A compositionally biased stretch (low complexity) spans 138-157 (SPFSQFASFSNASSPFSNVS). 2 stretches are compositionally biased toward basic and acidic residues: residues 205–217 (SGKE…KSSE) and 241–252 (TKSEPKEADKGS). The segment covering 253–263 (GDSTKSTMHQL) has biased composition (polar residues). The RanBD1 domain maps to 256–396 (TKSTMHQLSD…VLEAIPKGGR (141 aa)).

Phosphorylated.

The protein resides in the nucleus. This chain is Brefeldin A resistance protein (hba1), found in Schizosaccharomyces pombe (strain 972 / ATCC 24843) (Fission yeast).